The following is a 1257-amino-acid chain: Neural cell adhesion molecule L1 (1257 aa).

The signal sequence occupies residues 1–19 (MVVALRYVWPLLLCSPCLL). Over 20–1120 (IQIPEEYEGH…RLPPAGFATE (1101 aa)) the chain is Extracellular. Ig-like C2-type domains follow at residues 35-125 (PVIT…TAMS), 139-226 (PKET…EPID), 240-328 (PRLL…YYVT), 333-420 (PYWL…AYIY), 425-507 (PAKI…NNVT), and 518-607 (TQIT…AQLL). Disulfide bonds link Cys57-Cys114 and Cys158-Cys209. Asn100, Asn203, Asn247, and Asn294 each carry an N-linked (GlcNAc...) asparagine glycan. 2 disulfide bridges follow: Cys264-Cys312 and Cys354-Cys404. Residues Asn433, Asn479, Asn490, and Asn505 are each glycosylated (N-linked (GlcNAc...) asparagine). Cys448 and Cys497 are oxidised to a cystine. Cys539 and Cys591 are oxidised to a cystine. Residues 554-556 (RGD) carry the Cell attachment site motif. N-linked (GlcNAc...) asparagine glycans are attached at residues Asn588 and Asn671. 5 consecutive Fibronectin type-III domains span residues 615–712 (VPRL…TPEA), 717–810 (NPVD…SGED), 814–916 (AIPE…TPEG), 920–1015 (HPEA…MALS), and 1016–1115 (GISD…LPPA). Residues 698–725 (GEPSPVSETVVTPEAAPEKNPVDVKGEG) are disordered. Residues 713–725 (APEKNPVDVKGEG) show a composition bias toward basic and acidic residues. N-linked (GlcNAc...) asparagine glycans are attached at residues Asn726, Asn777, Asn825, Asn849, Asn876, Asn979, Asn1022, Asn1030, Asn1071, and Asn1105. Residues 1121–1143 (GWFIGFVSAIILLLLVLLILCFI) traverse the membrane as a helical segment. The Cytoplasmic portion of the chain corresponds to 1144–1257 (KRSKGGKYSV…SPINPAVALE (114 aa)). A phosphoserine mark is found at Ser1163, Thr1172, Arg1177, and Ser1178. The segment covering 1176-1187 (YRSLESDNEEKA) has biased composition (basic and acidic residues). Disordered regions lie at residues 1176–1207 (YRSL…SDDS) and 1226–1257 (IGQY…VALE). Ser1181 is subject to Phosphoserine; by CaMK2. Phosphoserine is present on residues Ser1194, Ser1243, Ser1244, and Ser1248. Positions 1241 to 1250 (NDSSGATSPI) are enriched in polar residues.

This sequence belongs to the immunoglobulin superfamily. L1/neurofascin/NgCAM family. In terms of assembly, interacts with SHTN1; the interaction occurs in axonal growth cones. Interacts with isoform 2 of BSG.

The protein resides in the cell membrane. The protein localises to the cell projection. It localises to the growth cone. It is found in the axon. Its subcellular location is the dendrite. Functionally, neural cell adhesion molecule involved in the dynamics of cell adhesion and in the generation of transmembrane signals at tyrosine kinase receptors. During brain development, critical in multiple processes, including neuronal migration, axonal growth and fasciculation, and synaptogenesis. In the mature brain, plays a role in the dynamics of neuronal structure and function, including synaptic plasticity. The polypeptide is Neural cell adhesion molecule L1 (L1CAM) (Homo sapiens (Human)).